A 249-amino-acid polypeptide reads, in one-letter code: 5'-nucleotidase SurE (249 aa).

D9, D10, S40, and N92 together coordinate a divalent metal cation.

This sequence belongs to the SurE nucleotidase family. It depends on a divalent metal cation as a cofactor.

The protein resides in the cytoplasm. The catalysed reaction is a ribonucleoside 5'-phosphate + H2O = a ribonucleoside + phosphate. In terms of biological role, nucleotidase that shows phosphatase activity on nucleoside 5'-monophosphates. This Shewanella loihica (strain ATCC BAA-1088 / PV-4) protein is 5'-nucleotidase SurE.